We begin with the raw amino-acid sequence, 206 residues long: Triafestin-2 (206 aa).

A signal peptide spans 1-18 (MKTILAVIFFGILAFAFA). Asparagine 25, asparagine 55, and asparagine 178 each carry an N-linked (GlcNAc...) asparagine glycan.

It belongs to the calycin superfamily. Triabin family. Interacts with host coagulation factor XII (F12) (inactive and activated) (via amino acids 1-77). Interacts with host high molecular weight kininogen (KNG1) (via amino acids 402-532). In terms of tissue distribution, salivary gland (at protein level).

The protein localises to the secreted. Its activity is regulated as follows. Zn(2+) modulates binding to host coagulation factor XII (F12) and high molecular weight kininogen (KNG1). In terms of biological role, suppresses activation of the host plasma kallikrein-kinin system, leading to inhibition of the intrinsic coagulation pathway. Blocks host coagulation factor XII (F12) and prekallikrein (KLKB1) reciprocal activation without affecting their amidolytic activities. Blocks binding of host F12 and high molecular weight kininogen (KNG1) to negatively charged surfaces. Attenuates generation of bradykinin by interfering with activation of host kallikrein-kinin system. The protein is Triafestin-2 of Triatoma infestans (Assassin bug).